The following is a 190-amino-acid chain: 6,7-dimethyl-8-ribityllumazine synthase (190 aa).

Residues W31, 65-67 (SFE), and 89-91 (CVI) contribute to the 5-amino-6-(D-ribitylamino)uracil site. Residue 94–95 (ET) participates in (2S)-2-hydroxy-3-oxobutyl phosphate binding. The active-site Proton donor is the H97. F122 provides a ligand contact to 5-amino-6-(D-ribitylamino)uracil. R136 is a (2S)-2-hydroxy-3-oxobutyl phosphate binding site.

Belongs to the DMRL synthase family.

The enzyme catalyses (2S)-2-hydroxy-3-oxobutyl phosphate + 5-amino-6-(D-ribitylamino)uracil = 6,7-dimethyl-8-(1-D-ribityl)lumazine + phosphate + 2 H2O + H(+). It functions in the pathway cofactor biosynthesis; riboflavin biosynthesis; riboflavin from 2-hydroxy-3-oxobutyl phosphate and 5-amino-6-(D-ribitylamino)uracil: step 1/2. Functionally, catalyzes the formation of 6,7-dimethyl-8-ribityllumazine by condensation of 5-amino-6-(D-ribitylamino)uracil with 3,4-dihydroxy-2-butanone 4-phosphate. This is the penultimate step in the biosynthesis of riboflavin. The sequence is that of 6,7-dimethyl-8-ribityllumazine synthase from Flavobacterium johnsoniae (strain ATCC 17061 / DSM 2064 / JCM 8514 / BCRC 14874 / CCUG 350202 / NBRC 14942 / NCIMB 11054 / UW101) (Cytophaga johnsonae).